Reading from the N-terminus, the 184-residue chain is Protein DMP2 (184 aa).

The next 4 membrane-spanning stretches (helical) occupy residues 19 to 39 (LIKL…PVLT), 45 to 65 (LLIN…SCCF), 105 to 125 (VGDF…SLLD), and 142 to 162 (IFLM…FTVF).

The protein belongs to the plant DMP1 protein family. In terms of tissue distribution, expressed constitutively in leaves, stems, flowers, siliques and roots.

It is found in the endoplasmic reticulum membrane. The protein resides in the vacuole membrane. In terms of biological role, involved in membrane remodeling. This is Protein DMP2 from Arabidopsis thaliana (Mouse-ear cress).